Consider the following 173-residue polypeptide: Crossover junction endodeoxyribonuclease RuvC (173 aa).

Catalysis depends on residues aspartate 8, glutamate 69, and aspartate 141. Mg(2+) is bound by residues aspartate 8, glutamate 69, and aspartate 141.

This sequence belongs to the RuvC family. As to quaternary structure, homodimer which binds Holliday junction (HJ) DNA. The HJ becomes 2-fold symmetrical on binding to RuvC with unstacked arms; it has a different conformation from HJ DNA in complex with RuvA. In the full resolvosome a probable DNA-RuvA(4)-RuvB(12)-RuvC(2) complex forms which resolves the HJ. Requires Mg(2+) as cofactor.

It is found in the cytoplasm. It catalyses the reaction Endonucleolytic cleavage at a junction such as a reciprocal single-stranded crossover between two homologous DNA duplexes (Holliday junction).. Its function is as follows. The RuvA-RuvB-RuvC complex processes Holliday junction (HJ) DNA during genetic recombination and DNA repair. Endonuclease that resolves HJ intermediates. Cleaves cruciform DNA by making single-stranded nicks across the HJ at symmetrical positions within the homologous arms, yielding a 5'-phosphate and a 3'-hydroxyl group; requires a central core of homology in the junction. The consensus cleavage sequence is 5'-(A/T)TT(C/G)-3'. Cleavage occurs on the 3'-side of the TT dinucleotide at the point of strand exchange. HJ branch migration catalyzed by RuvA-RuvB allows RuvC to scan DNA until it finds its consensus sequence, where it cleaves and resolves the cruciform DNA. This Stenotrophomonas maltophilia (strain R551-3) protein is Crossover junction endodeoxyribonuclease RuvC.